Reading from the N-terminus, the 441-residue chain is Xaa-Pro aminopeptidase (441 aa).

Asp-261, Asp-272, His-355, Glu-384, and Glu-407 together coordinate Mn(2+).

It belongs to the peptidase M24B family. As to quaternary structure, homotetramer. Mn(2+) serves as cofactor.

It is found in the cytoplasm. It catalyses the reaction Release of any N-terminal amino acid, including proline, that is linked to proline, even from a dipeptide or tripeptide.. In Escherichia coli (strain K12), this protein is Xaa-Pro aminopeptidase (pepP).